Here is a 243-residue protein sequence, read N- to C-terminus: Protein IN2-1 homolog A (243 aa).

In terms of domain architecture, GST N-terminal spans 31-112; sequence GTTRLYICYF…YIDSHFEGPA (82 aa). Residues Lys-70, Val-84, and 96–97 each bind glutathione; that span reads ES. Positions 117 to 240 constitute a GST C-terminal domain; the sequence is DPEKRQFADE…YLLDLAKTHL (124 aa).

Belongs to the GST superfamily. HSP26 family.

The sequence is that of Protein IN2-1 homolog A from Oryza sativa subsp. japonica (Rice).